A 581-amino-acid chain; its full sequence is Chaperonin GroEL 1 (581 aa).

Residues threonine 29–proline 32, aspartate 86–threonine 90, glycine 413, and aspartate 492 contribute to the ATP site.

It belongs to the chaperonin (HSP60) family. Forms a cylinder of 14 subunits composed of two heptameric rings stacked back-to-back. Interacts with the co-chaperonin GroES.

Its subcellular location is the cytoplasm. The catalysed reaction is ATP + H2O + a folded polypeptide = ADP + phosphate + an unfolded polypeptide.. Together with its co-chaperonin GroES, plays an essential role in assisting protein folding. The GroEL-GroES system forms a nano-cage that allows encapsulation of the non-native substrate proteins and provides a physical environment optimized to promote and accelerate protein folding. The protein is Chaperonin GroEL 1 of Prochlorococcus marinus subsp. pastoris (strain CCMP1986 / NIES-2087 / MED4).